The sequence spans 635 residues: Glutamyl-tRNA(Gln) amidotransferase subunit E (635 aa).

The tract at residues 415–437 (LPDGNTEYMRPLPGKARMYPETD) is disordered.

It belongs to the GatB/GatE family. GatE subfamily. In terms of assembly, heterodimer of GatD and GatE.

The enzyme catalyses L-glutamyl-tRNA(Gln) + L-glutamine + ATP + H2O = L-glutaminyl-tRNA(Gln) + L-glutamate + ADP + phosphate + H(+). Allows the formation of correctly charged Gln-tRNA(Gln) through the transamidation of misacylated Glu-tRNA(Gln) in organisms which lack glutaminyl-tRNA synthetase. The reaction takes place in the presence of glutamine and ATP through an activated gamma-phospho-Glu-tRNA(Gln). The GatDE system is specific for glutamate and does not act on aspartate. This is Glutamyl-tRNA(Gln) amidotransferase subunit E from Pyrococcus horikoshii (strain ATCC 700860 / DSM 12428 / JCM 9974 / NBRC 100139 / OT-3).